A 607-amino-acid polypeptide reads, in one-letter code: MCGIIGIIGNDEVAPRLVDALKRLEYRGYDSAGIATLQNGRLDRRRAEGKLVNLEKRLAGEPLPGVIGIGHTRWATHGRPVEHNAHPHITTRLAVVHNGIIENFAELRAMLEAEGRKFETETDTEAVAHLVTRELEKGKSPVEAVRDCLPHLKGAFALAFLFEGDEELLIGARQGPPLAVGYGEGEMFLGSDAIALAPFTDTISYLEDGDWAVLTRNGVSIYDENNKPVERPVQKSQNTNMLVSKGNHRHFMQKEMFEQPEVISHTLANYLDFTTGKVRKEAIGIDFSKVDRLTITACGTAYYAATVAKYWFEQIARLPVDSDIASEFRYREMPLSKDSLAMFVSQSGETADTLASLRYCKAQGLKIASVLNVTGSTIARESDAVFPTLAGPEIGVASTKAFTCQLSAMASLAIAAARARGAIDEVREQELVHQLSEAPRFINQVLKLEDQIAVVCHDLSKVNHVLYLGRGTSFPLAMEGALKLKEISYIHAEGYAAGELKHGPIALIDETMPVIVIAPSDRLYEKTVSNMQEVAARGGRIILITDKKGAESASIDTMATIVLPEVPEFISPLVYALPIQMLAYHTAVLMGTDVDQPRNLAKSVTVE.

The active-site Nucleophile; for GATase activity is the Cys2. The Glutamine amidotransferase type-2 domain maps to 2–217 (CGIIGIIGND…DGDWAVLTRN (216 aa)). SIS domains are found at residues 283–422 (IGID…ARGA) and 455–597 (VCHD…VDQP). The active-site For Fru-6P isomerization activity is the Lys602.

In terms of assembly, homodimer.

It is found in the cytoplasm. It catalyses the reaction D-fructose 6-phosphate + L-glutamine = D-glucosamine 6-phosphate + L-glutamate. Functionally, catalyzes the first step in hexosamine metabolism, converting fructose-6P into glucosamine-6P using glutamine as a nitrogen source. The chain is Glutamine--fructose-6-phosphate aminotransferase [isomerizing] from Brucella melitensis biotype 1 (strain ATCC 23456 / CCUG 17765 / NCTC 10094 / 16M).